The following is a 208-amino-acid chain: Uracil phosphoribosyltransferase (208 aa).

Residues Arg-78, Arg-103, and 130–138 contribute to the 5-phospho-alpha-D-ribose 1-diphosphate site; that span reads DPMLAIGGS. Uracil-binding positions include Ile-193 and 198–200; that span reads GDA. Position 199 (Asp-199) interacts with 5-phospho-alpha-D-ribose 1-diphosphate.

It belongs to the UPRTase family. The cofactor is Mg(2+).

The enzyme catalyses UMP + diphosphate = 5-phospho-alpha-D-ribose 1-diphosphate + uracil. It functions in the pathway pyrimidine metabolism; UMP biosynthesis via salvage pathway; UMP from uracil: step 1/1. Its activity is regulated as follows. Allosterically activated by GTP. Functionally, catalyzes the conversion of uracil and 5-phospho-alpha-D-ribose 1-diphosphate (PRPP) to UMP and diphosphate. This Vibrio cholerae serotype O1 (strain ATCC 39315 / El Tor Inaba N16961) protein is Uracil phosphoribosyltransferase.